We begin with the raw amino-acid sequence, 274 residues long: Triosephosphate isomerase (274 aa).

31–33 is a binding site for substrate; sequence NWK. Catalysis depends on His-118, which acts as the Electrophile. Glu-188 acts as the Proton acceptor in catalysis. Residues Gly-194, Ser-234, and 255–256 contribute to the substrate site; that span reads GG.

This sequence belongs to the triosephosphate isomerase family. In terms of assembly, homodimer.

It is found in the cytoplasm. It carries out the reaction D-glyceraldehyde 3-phosphate = dihydroxyacetone phosphate. It participates in carbohydrate biosynthesis; gluconeogenesis. The protein operates within carbohydrate degradation; glycolysis; D-glyceraldehyde 3-phosphate from glycerone phosphate: step 1/1. Its function is as follows. Involved in the gluconeogenesis. Catalyzes stereospecifically the conversion of dihydroxyacetone phosphate (DHAP) to D-glyceraldehyde-3-phosphate (G3P). This chain is Triosephosphate isomerase, found in Chlamydia trachomatis serovar D (strain ATCC VR-885 / DSM 19411 / UW-3/Cx).